A 270-amino-acid chain; its full sequence is uncharacterized protein (270 aa).

This is an uncharacterized protein from Aquifex aeolicus (strain VF5).